Consider the following 108-residue polypeptide: Thiosulfate sulfurtransferase GlpE (108 aa).

One can recognise a Rhodanese domain in the interval 17-105 (HQGAAVLVDI…WHRHFPADVA (89 aa)). Catalysis depends on cysteine 65, which acts as the Cysteine persulfide intermediate.

Belongs to the GlpE family.

It is found in the cytoplasm. The catalysed reaction is thiosulfate + hydrogen cyanide = thiocyanate + sulfite + 2 H(+). It carries out the reaction thiosulfate + [thioredoxin]-dithiol = [thioredoxin]-disulfide + hydrogen sulfide + sulfite + 2 H(+). In terms of biological role, transferase that catalyzes the transfer of sulfur from thiosulfate to thiophilic acceptors such as cyanide or dithiols. May function in a CysM-independent thiosulfate assimilation pathway by catalyzing the conversion of thiosulfate to sulfite, which can then be used for L-cysteine biosynthesis. In Salmonella arizonae (strain ATCC BAA-731 / CDC346-86 / RSK2980), this protein is Thiosulfate sulfurtransferase GlpE.